A 202-amino-acid polypeptide reads, in one-letter code: Small ribosomal subunit protein uS5 (202 aa).

The span at Met-1–Gly-13 shows a compositional bias: gly residues. The disordered stretch occupies residues Met-1–Lys-31. A compositionally biased stretch (basic and acidic residues) spans Ser-14–Ser-23. The 64-residue stretch at Tyr-34–Val-97 folds into the S5 DRBM domain.

The protein belongs to the universal ribosomal protein uS5 family. Part of the 30S ribosomal subunit. Contacts proteins S4 and S8.

With S4 and S12 plays an important role in translational accuracy. Its function is as follows. Located at the back of the 30S subunit body where it stabilizes the conformation of the head with respect to the body. This is Small ribosomal subunit protein uS5 from Frankia alni (strain DSM 45986 / CECT 9034 / ACN14a).